A 149-amino-acid polypeptide reads, in one-letter code: UPF0251 protein Moth_1655 (149 aa).

Positions 129–149 (AGRGPGRGRCHRHGRFGEGEH) are disordered.

This sequence belongs to the UPF0251 family.

In Moorella thermoacetica (strain ATCC 39073 / JCM 9320), this protein is UPF0251 protein Moth_1655.